The sequence spans 500 residues: Cytochrome P450 11B1, mitochondrial (500 aa).

Residues M1–L24 constitute a mitochondrion transit peptide. Position 447 (C447) interacts with heme.

It belongs to the cytochrome P450 family. Requires heme as cofactor.

It is found in the mitochondrion inner membrane. It carries out the reaction a steroid + 2 reduced [adrenodoxin] + O2 + 2 H(+) = an 11beta-hydroxysteroid + 2 oxidized [adrenodoxin] + H2O. It catalyses the reaction 11-deoxycortisol + 2 reduced [adrenodoxin] + O2 + 2 H(+) = cortisol + 2 oxidized [adrenodoxin] + H2O. The catalysed reaction is 21-hydroxyprogesterone + 2 reduced [adrenodoxin] + O2 + 2 H(+) = corticosterone + 2 oxidized [adrenodoxin] + H2O. The enzyme catalyses 21-hydroxyprogesterone + 2 reduced [adrenodoxin] + O2 + 2 H(+) = 18-hydroxy-11-deoxycorticosterone + 2 oxidized [adrenodoxin] + H2O. It carries out the reaction 21-hydroxyprogesterone + 2 reduced [adrenodoxin] + O2 + 2 H(+) = 19-hydroxy-11-deoxycorticosterone + 2 oxidized [adrenodoxin] + H2O. It catalyses the reaction cortisol + 2 reduced [adrenodoxin] + O2 + 2 H(+) = 18-hydroxycortisol + 2 oxidized [adrenodoxin] + H2O. The catalysed reaction is 11-deoxycortisol + 2 reduced [adrenodoxin] + O2 + 2 H(+) = 18-hydroxy-11-deoxycortisol + 2 oxidized [adrenodoxin] + H2O. It functions in the pathway steroid biosynthesis; glucocorticoid biosynthesis. It participates in steroid hormone biosynthesis. In terms of biological role, a cytochrome P450 monooxygenase involved in the biosynthesis of adrenal corticoids. Catalyzes a variety of reactions that are essential for many species, including detoxification, defense, and the formation of endogenous chemicals like steroid hormones. Steroid 11beta, 18- and 19-hydroxylase with preferred regioselectivity at 11beta, then 18, and lastly 19. Catalyzes the hydroxylation of 11-deoxycortisol and 11-deoxycorticosterone (21-hydroxyprogesterone) at 11beta position, yielding cortisol or corticosterone, respectively, but cannot produce aldosterone. Mechanistically, uses molecular oxygen inserting one oxygen atom into a substrate for hydroxylation and reducing the second into a water molecule. Two electrons are provided by NADPH via a two-protein mitochondrial transfer system comprising flavoprotein FDXR (adrenodoxin/ferredoxin reductase) and nonheme iron-sulfur protein FDX1 or FDX2 (adrenodoxin/ferredoxin). Due to its lack of 18-oxidation activity, it is incapable of generating aldosterone. Could also be involved in the androgen metabolic pathway. This Cavia porcellus (Guinea pig) protein is Cytochrome P450 11B1, mitochondrial (CYP11B1).